We begin with the raw amino-acid sequence, 455 residues long: 5'-nucleotidase domain-containing protein 1 (455 aa).

Aspartate 16 serves as the catalytic Nucleophile. Residues aspartate 16 and aspartate 18 each coordinate Mg(2+). Aspartate 18 functions as the Proton donor in the catalytic mechanism. Lysine 171 carries the post-translational modification N6-acetyllysine. Residue aspartate 313 coordinates Mg(2+). Residues 339–364 are compositionally biased toward basic and acidic residues; the sequence is GDEGTRSQRPEESEPLEKKGKYEGPK. Residues 339 to 368 form a disordered region; that stretch reads GDEGTRSQRPEESEPLEKKGKYEGPKAKPL.

The protein belongs to the 5'(3')-deoxyribonucleotidase family.

The polypeptide is 5'-nucleotidase domain-containing protein 1 (NT5DC1) (Homo sapiens (Human)).